The sequence spans 254 residues: NAD kinase (254 aa).

The Proton acceptor role is filled by aspartate 44. Residues 44–45 (DG), 114–115 (NE), aspartate 144, alanine 152, 155–160 (TAYNYS), and alanine 179 each bind NAD(+).

This sequence belongs to the NAD kinase family. The cofactor is a divalent metal cation.

It is found in the cytoplasm. It catalyses the reaction NAD(+) + ATP = ADP + NADP(+) + H(+). Functionally, involved in the regulation of the intracellular balance of NAD and NADP, and is a key enzyme in the biosynthesis of NADP. Catalyzes specifically the phosphorylation on 2'-hydroxyl of the adenosine moiety of NAD to yield NADP. This chain is NAD kinase, found in Cereibacter sphaeroides (strain ATCC 17029 / ATH 2.4.9) (Rhodobacter sphaeroides).